The chain runs to 154 residues: uncharacterized protein (154 aa).

Residues 1–19 form the signal peptide; sequence MWSLKSTLCIALLVTYSVA. 2 consecutive ShKT domains span residues 67–102 and 113–150; these read CADD…CGFC and CVDS…CKLC. 6 disulfides stabilise this stretch: Cys-67–Cys-102, Cys-75–Cys-95, Cys-82–Cys-99, Cys-113–Cys-150, Cys-120–Cys-143, and Cys-129–Cys-147.

This is an uncharacterized protein from Caenorhabditis elegans.